The following is a 455-amino-acid chain: Elongation factor Tu, mitochondrial (455 aa).

A mitochondrion-targeting transit peptide spans 1–46; the sequence is MTTMAAATLLRATPHFSGLAAGRTFLLQGLLRLLKAPALPLLCRGL. Residues 58 to 254 enclose the tr-type G domain; the sequence is KPHVNVGTIG…AVDTYIPVPA (197 aa). A G1 region spans residues 67–74; sequence GHVDHGKT. GTP-binding residues include Asp-70, Gly-72, Lys-73, Thr-74, and Thr-75. Thr-74 contributes to the Mg(2+) binding site. An N6-acetyllysine modification is found at Lys-82. The residue at position 91 (Lys-91) is an N6-acetyllysine; alternate. Position 91 is an N6-succinyllysine; alternate (Lys-91). The interval 108 to 112 is G2; the sequence is GITIN. The segment at 129–132 is G3; that stretch reads DCPG. GTP-binding residues include Asn-184, Asp-187, Ser-222, Ala-223, and Leu-224. Positions 184-187 are G4; that stretch reads NKAD. The G5 stretch occupies residues 222 to 224; it reads SAL. Lys-237 bears the N6-succinyllysine mark. Lys-259 carries the N6-acetyllysine modification. Residue Thr-281 is modified to Phosphothreonine. Residue Lys-289 is modified to N6-succinyllysine. Ser-315 carries the post-translational modification Phosphoserine. An N6-acetyllysine mark is found at Lys-364 and Lys-421.

Belongs to the TRAFAC class translation factor GTPase superfamily. Classic translation factor GTPase family. EF-Tu/EF-1A subfamily. As to quaternary structure, interacts with NLRX1. Interacts with ATG16L1. (Microbial infection) Interacts with human parainfluenza virus 3 matrix protein; this interaction inhibits RLR-mediated type I interferon production while promoting autophagy. In terms of assembly, (Microbial infection) Interacts with Hantaan hantavirus glycoprotein N; this interaction contributes to the virus-induced degradation of mitochondria by autophagy, which leads to degradation of MAVS and inhibition of type I interferon (IFN) responses.

The protein resides in the mitochondrion. The catalysed reaction is GTP + H2O = GDP + phosphate + H(+). Its function is as follows. GTP hydrolase that promotes the GTP-dependent binding of aminoacyl-tRNA to the A-site of ribosomes during protein biosynthesis. Also plays a role in the regulation of autophagy and innate immunity. Recruits ATG5-ATG12 and NLRX1 at mitochondria and serves as a checkpoint of the RIGI-MAVS pathway. In turn, inhibits RLR-mediated type I interferon while promoting autophagy. The polypeptide is Elongation factor Tu, mitochondrial (TUFM) (Homo sapiens (Human)).